Reading from the N-terminus, the 633-residue chain is Acetylcholinesterase (633 aa).

The signal sequence occupies residues 1–23 (MKILDALLFPVIFIMFFIHLSIA). A disulfide bridge connects residues Cys91 and Cys118. Residues Asn133 and Asn184 are each glycosylated (N-linked (GlcNAc...) asparagine). Ser225 functions as the Acyl-ester intermediate in the catalytic mechanism. Cys279 and Cys290 are joined by a disulfide. N-linked (GlcNAc...) asparagine glycosylation is present at Asn283. The active-site Charge relay system is Glu352. The N-linked (GlcNAc...) asparagine glycan is linked to Asn368. Cys427 and Cys579 are oxidised to a cystine. The active-site Charge relay system is His494. 2 N-linked (GlcNAc...) asparagine glycosylation sites follow: Asn511 and Asn591.

This sequence belongs to the type-B carboxylesterase/lipase family.

Its subcellular location is the synapse. The protein localises to the secreted. It is found in the cell membrane. The catalysed reaction is acetylcholine + H2O = choline + acetate + H(+). Its function is as follows. Terminates signal transduction at the neuromuscular junction by rapid hydrolysis of the acetylcholine released into the synaptic cleft. The polypeptide is Acetylcholinesterase (ache) (Electrophorus electricus (Electric eel)).